The chain runs to 427 residues: MSIVFSVVRSRIPSHYGHYNHSHHPHFEDLVVKPLTNILPLLTGFTLLAGVILLIHISIPQAEPYTSKFLFLSHRQPSTGLYSVGDGDVCFVLFEVLTLAGLREGCMKYLLAPFARVMGVSKERKVVRFSEQGWILMYYSVFWPLGMLIWAKSPHFSDMDQLWIHWPQRDIDGLIKFYILTQLAYWIQQVISVNIEARRKDYWLNVVHHFITITLILLCYVYHHTRVGSLILVMMDAIEILFPFAKCLRYLGFTTLCDLVFFLFFVTWIVSRHVLYLMTCWSVYSDVPRIIEPSCFMGSANDLHGPLPVPDDWWHLIEPWIYPKGKVCHSDSFRVSILAYLLLLQVLMMIWFGFICKVAIGVLDGRAAEDVRSDVESDEEDSEPVANGSGWQQSQLQPGRRVGSNGAAQMVDGVKKDLRCNIHCNEE.

N-linked (GlcNAc...) asparagine glycosylation is present at Asn-20. The next 6 helical transmembrane spans lie at 38–58 (ILPL…IHIS), 131–151 (EQGW…LIWA), 173–193 (GLIK…VISV), 202–222 (YWLN…CYVY), 250–270 (YLGF…TWIV), and 335–355 (VSIL…FGFI). A TLC domain is found at 124-364 (RKVVRFSEQG…ICKVAIGVLD (241 aa)). The tract at residues 373–406 (SDVESDEEDSEPVANGSGWQQSQLQPGRRVGSNG) is disordered. Asn-387 is a glycosylation site (N-linked (GlcNAc...) asparagine).

Belongs to the sphingosine N-acyltransferase family.

The protein localises to the endoplasmic reticulum membrane. It participates in mycotoxin biosynthesis. Functionally, ceramide synthase; part of the gene cluster that mediates the biosynthesis of fumonisins B1 (FB1), B2 (FB2), B3 (FB3), and B4 (FB4), which are carcinogenic mycotoxins. Plays a role in self-protection from FB1 toxicity by contributing to ceramide synthesis. The biosynthesis starts with the FUM1-catalyzed carbon chain assembly from one molecule of acetyl-CoA, eight molecules of malonyl-CoA, and two molecules of methionine (in S-adenosyl form). The C18 polyketide chain is released from the enzyme by a nucleophilic attack of a carbanion, which is derived from R-carbon of alanine by decarboxylation, on the carbonyl carbon of polyketide acyl chain. This step is catalyzed by the pyridoxal 5'-phosphate-dependent aminoacyl transferase FUM8. The resultant 3-keto intermediate is then stereospecifically reduced to a 3-hydroxyl product by reductase FUM13. Subsequent oxidations at C-10 by the cytochrome P450 monooxygenase FUM2, C-14 and C-15 by FUM6, FUM12 or FUM15, tricarballylic esterification of the hydroxyl groups on C-14 and C-15 by acyltransferase FUM14, and C-5 hydroxylation by 2-keto-glutarate-dependent dioxygenase FUM3 furnish the biosynthesis of fumonisins. The tricarballylic moieties are most likely derived from the citric acid cycle, and their addition to the carbon backbone may involve FUM7, FUM10, FUM11 and FUM14. This Gibberella moniliformis (strain M3125 / FGSC 7600) (Maize ear and stalk rot fungus) protein is Ceramide Synthase FUM18.